Consider the following 303-residue polypeptide: Biphenyl-2,3-diol 1,2-dioxygenase (303 aa).

VOC domains lie at 5–119 and 143–264; these read SLGY…IYYG and GLGH…YGWS. Residues H146, H210, and E260 each contribute to the Fe cation site. Positions 283–303 are disordered; it reads WGHKSVRDKALRATKHEQQPE. Positions 287–303 are enriched in basic and acidic residues; that stretch reads SVRDKALRATKHEQQPE.

It belongs to the extradiol ring-cleavage dioxygenase family. Homooctamer. Fe(2+) serves as cofactor.

It catalyses the reaction biphenyl-2,3-diol + O2 = 2-hydroxy-6-oxo-6-phenylhexa-2,4-dienoate + H(+). The protein operates within xenobiotic degradation; biphenyl degradation; 2-hydroxy-2,4-pentadienoate and benzoate from biphenyl: step 3/4. In Metapseudomonas furukawaii (Pseudomonas furukawaii), this protein is Biphenyl-2,3-diol 1,2-dioxygenase (bphC).